The sequence spans 922 residues: Neuropilin-1 (922 aa).

The signal sequence occupies residues 1 to 21 (MERGLPLLCATLALALALAGA). Over 22 to 855 (FRSDKCGGTI…PGNVLKTLDP (834 aa)) the chain is Extracellular. 3 disulfide bridges follow: Cys-27/Cys-54, Cys-82/Cys-104, and Cys-147/Cys-173. 2 consecutive CUB domains span residues 27–141 (CGGT…YEIF) and 147–265 (CSQN…YSVL). Asn-150 is a glycosylation site (N-linked (GlcNAc...) asparagine). 3 residues coordinate Ca(2+): Glu-195, Asp-209, and Asp-250. Cysteines 206 and 228 form a disulfide. N-linked (GlcNAc...) asparagine glycosylation is found at Asn-261, Asn-300, and Asn-522. Intrachain disulfides connect Cys-275–Cys-424 and Cys-431–Cys-583. 2 consecutive F5/8 type C domains span residues 275-424 (CMEA…VYGC) and 431-583 (CSGM…LLGC). Residue Ser-612 is glycosylated (O-linked (Xyl...) (chondroitin sulfate) serine; alternate). An O-linked (Xyl...) (heparan sulfate) serine; alternate glycan is attached at Ser-612. In terms of domain architecture, MAM spans 645–811 (TYGFNCEFGW…NHIPQEDCAK (167 aa)). Residue Ser-829 is glycosylated (O-linked (Xyl...) (chondroitin sulfate) serine). Asn-841 carries N-linked (GlcNAc...) asparagine glycosylation. The chain crosses the membrane as a helical span at residues 856–880 (ILITIIAMSALGVLLGAVCGVVLYC). Over 881–922 (ACWHNGMSERNLSALENYNFELVDGVKLKKDKLNPQSNYSEA) the chain is Cytoplasmic. Ser-893 bears the Phosphoserine mark.

It belongs to the neuropilin family. As to quaternary structure, homodimer, and heterodimer with NRP2. Binds PLXNB1. Interacts with FER. Interacts with VEGFA. Interacts with ABCB8/MITOSUR in mitochondria. Found in the embryonic nervous system. Expressed in dorsal root ganglia.

It is found in the mitochondrion membrane. It localises to the cell membrane. The protein localises to the cytoplasm. Its function is as follows. Cell-surface receptor involved in the development of the cardiovascular system, in angiogenesis, in the formation of certain neuronal circuits and in organogenesis outside the nervous system. Mediates the chemorepulsant activity of semaphorins. Recognizes a C-end rule (CendR) motif R/KXXR/K on its ligands which causes cellular internalization and vascular leakage. It binds to semaphorin 3A, the PLGF-2 isoform of PGF, the VEGF165 isoform of VEGFA and VEGFB. Coexpression with KDR results in increased VEGF165 binding to KDR as well as increased chemotaxis. Regulates VEGF-induced angiogenesis. Binding to VEGFA initiates a signaling pathway needed for motor neuron axon guidance and cell body migration, including for the caudal migration of facial motor neurons from rhombomere 4 to rhombomere 6 during embryonic development. Regulates mitochondrial iron transport via interaction with ABCB8/MITOSUR. The protein is Neuropilin-1 (Nrp1) of Rattus norvegicus (Rat).